A 227-amino-acid chain; its full sequence is Cytochrome c oxidase subunit 2 (227 aa).

The Mitochondrial intermembrane portion of the chain corresponds to 1 to 26 (MATWSNFNLQNSASPLMEQIIFFHDH). The chain crosses the membrane as a helical span at residues 27–51 (TLVILIMITILVGYLMISLFFNSYI). At 52-62 (NRFLLEGQMIE) the chain is on the mitochondrial matrix side. The helical transmembrane segment at 63 to 81 (LIWTILPAITLIFIALPSL) threads the bilayer. Residues 82-227 (RLLYLLDELN…NFINWINNYS (146 aa)) are Mitochondrial intermembrane-facing. Residues histidine 161, cysteine 196, glutamate 198, cysteine 200, histidine 204, and methionine 207 each contribute to the Cu cation site. Position 198 (glutamate 198) interacts with Mg(2+).

Belongs to the cytochrome c oxidase subunit 2 family. As to quaternary structure, component of the cytochrome c oxidase (complex IV, CIV), a multisubunit enzyme composed of a catalytic core of 3 subunits and several supernumerary subunits. The complex exists as a monomer or a dimer and forms supercomplexes (SCs) in the inner mitochondrial membrane with ubiquinol-cytochrome c oxidoreductase (cytochrome b-c1 complex, complex III, CIII). Cu cation serves as cofactor.

It localises to the mitochondrion inner membrane. The catalysed reaction is 4 Fe(II)-[cytochrome c] + O2 + 8 H(+)(in) = 4 Fe(III)-[cytochrome c] + 2 H2O + 4 H(+)(out). In terms of biological role, component of the cytochrome c oxidase, the last enzyme in the mitochondrial electron transport chain which drives oxidative phosphorylation. The respiratory chain contains 3 multisubunit complexes succinate dehydrogenase (complex II, CII), ubiquinol-cytochrome c oxidoreductase (cytochrome b-c1 complex, complex III, CIII) and cytochrome c oxidase (complex IV, CIV), that cooperate to transfer electrons derived from NADH and succinate to molecular oxygen, creating an electrochemical gradient over the inner membrane that drives transmembrane transport and the ATP synthase. Cytochrome c oxidase is the component of the respiratory chain that catalyzes the reduction of oxygen to water. Electrons originating from reduced cytochrome c in the intermembrane space (IMS) are transferred via the dinuclear copper A center (CU(A)) of subunit 2 and heme A of subunit 1 to the active site in subunit 1, a binuclear center (BNC) formed by heme A3 and copper B (CU(B)). The BNC reduces molecular oxygen to 2 water molecules using 4 electrons from cytochrome c in the IMS and 4 protons from the mitochondrial matrix. In Choristoneura rosaceana (Oblique banded leafroller), this protein is Cytochrome c oxidase subunit 2 (COII).